The sequence spans 485 residues: Glutamyl-tRNA(Gln) amidotransferase subunit A (485 aa).

Catalysis depends on charge relay system residues K78 and S153. The active-site Acyl-ester intermediate is S177.

This sequence belongs to the amidase family. GatA subfamily. Heterotrimer of A, B and C subunits.

The enzyme catalyses L-glutamyl-tRNA(Gln) + L-glutamine + ATP + H2O = L-glutaminyl-tRNA(Gln) + L-glutamate + ADP + phosphate + H(+). Allows the formation of correctly charged Gln-tRNA(Gln) through the transamidation of misacylated Glu-tRNA(Gln) in organisms which lack glutaminyl-tRNA synthetase. The reaction takes place in the presence of glutamine and ATP through an activated gamma-phospho-Glu-tRNA(Gln). The chain is Glutamyl-tRNA(Gln) amidotransferase subunit A from Geobacter metallireducens (strain ATCC 53774 / DSM 7210 / GS-15).